Consider the following 390-residue polypeptide: S-adenosylmethionine synthase 2 (390 aa).

A Mg(2+)-binding site is contributed by Glu-9. Position 15 (His-15) interacts with ATP. Glu-43 lines the K(+) pocket. Residues Glu-56 and Gln-99 each coordinate L-methionine. Residues 167 to 169, 235 to 238, Asp-246, 252 to 253, Ala-269, Lys-273, and Lys-277 contribute to the ATP site; these read DGK, SGRF, and RK. Residue Asp-246 coordinates L-methionine. Position 277 (Lys-277) interacts with L-methionine.

The protein belongs to the AdoMet synthase family. Homotetramer. Requires Mn(2+) as cofactor. It depends on Mg(2+) as a cofactor. The cofactor is Co(2+). K(+) is required as a cofactor.

The protein localises to the cytoplasm. It carries out the reaction L-methionine + ATP + H2O = S-adenosyl-L-methionine + phosphate + diphosphate. Its pathway is amino-acid biosynthesis; S-adenosyl-L-methionine biosynthesis; S-adenosyl-L-methionine from L-methionine: step 1/1. In terms of biological role, catalyzes the formation of S-adenosylmethionine from methionine and ATP. The reaction comprises two steps that are both catalyzed by the same enzyme: formation of S-adenosylmethionine (AdoMet) and triphosphate, and subsequent hydrolysis of the triphosphate. In Actinidia chinensis var. chinensis (Chinese soft-hair kiwi), this protein is S-adenosylmethionine synthase 2 (SAM2).